The following is an 810-amino-acid chain: Phospholipase D alpha 1 (810 aa).

Positions 1-36 (MAQHLLHGTLHATIYEVDDLHTGGLRSGFFGKILAN) are excised as a propeptide. One can recognise a C2 domain in the interval 1–126 (MAQHLLHGTL…IHGEEVDQWV (126 aa)). Ca(2+) is bound at residue Asp-187. A PLD phosphodiesterase 1 domain is found at 327–366 (AMFTHHQKIVVVDSEMPSRGGSQMRRIVSFVGGIDLCDGR). Active-site residues include His-332, Lys-334, and Asp-339. Residue His-332 coordinates a 1,2-diacyl-sn-glycero-3-phosphate. Residues His-372 and His-406 each contribute to the Ca(2+) site. The a 1,2-diacyl-sn-glycero-3-phosphate site is built by Gln-522 and His-661. In terms of domain architecture, PLD phosphodiesterase 2 spans 656-683 (FMIYVHTKMMIVDDEYIIIGSANINQRS). Active-site residues include His-661, Lys-663, and Asp-668. Ca(2+) is bound at residue Glu-722.

The protein belongs to the phospholipase D family. C2-PLD subfamily. The cofactor is Ca(2+).

The protein resides in the cytoplasm. It is found in the membrane. The enzyme catalyses a 1,2-diacyl-sn-glycero-3-phosphocholine + H2O = a 1,2-diacyl-sn-glycero-3-phosphate + choline + H(+). Its function is as follows. Hydrolyzes glycerol-phospholipids at the terminal phosphodiesteric bond. Plays an important role in various cellular processes, including phytohormone action, vesicular trafficking, secretion, cytoskeletal arrangement, meiosis, tumor promotion, pathogenesis, membrane deterioration and senescence. In Brassica oleracea var. capitata (Cabbage), this protein is Phospholipase D alpha 1 (PLD1).